Here is a 287-residue protein sequence, read N- to C-terminus: ATP synthase gamma chain (287 aa).

This sequence belongs to the ATPase gamma chain family. As to quaternary structure, F-type ATPases have 2 components, CF(1) - the catalytic core - and CF(0) - the membrane proton channel. CF(1) has five subunits: alpha(3), beta(3), gamma(1), delta(1), epsilon(1). CF(0) has three main subunits: a, b and c.

The protein resides in the cell inner membrane. Produces ATP from ADP in the presence of a proton gradient across the membrane. The gamma chain is believed to be important in regulating ATPase activity and the flow of protons through the CF(0) complex. This is ATP synthase gamma chain from Colwellia maris.